The primary structure comprises 140 residues: TPT1-like protein (140 aa).

The TCTP domain maps to 6 to 140 (MITYWDLISH…LANFKNYQKT (135 aa)).

Belongs to the TCTP family.

The protein is TPT1-like protein of Homo sapiens (Human).